The primary structure comprises 111 residues: uncharacterized protein (111 aa).

This is an uncharacterized protein from Saccharolobus solfataricus (strain ATCC 35092 / DSM 1617 / JCM 11322 / P2) (Sulfolobus solfataricus).